The sequence spans 480 residues: MKVLSVSSEVFPLIKTGGLADVAGALPGALNPHGIETKTLIPGYPAVMKVIRNPVARLEFADLLGEKATVFEVEHSGMSFLVLDAPAYYNRTGGPYVDATGKDYPDNWQRFAALSLAGAEIAAGQMPGWQPDLVHVHDWQSALVPVYMRYAPTPELPSVLTIHNIAFQGQFGPSIFPGLRLPAHAYSMQGIEYYGDIGFLKGGLQTAHALTTVSPSYAGEILTPEFGMGLEGVIASRAASLHGIVNGIDDGIWNPETDPMIARTYGASTLKDRAINRKQVVEHFGLDDDDGPIFCVVSRLTWQKGMDLLASISSEIVAMGGKLAILGAGDAALEGALFAAAGRHRGRVGVSAGYNEAMSHLMQAGCDAIIIPSRFEPCGLTQLYGLRYGCVPIVARTGGLNDTIIDANHAALQAKVATGIQFSPVTAEGLLQAIRRAIYLFQDRKVWTQMQKQGMKSDVSWGKSAERYAALYSRLVSRGA.

ADP-alpha-D-glucose is bound at residue K15.

Belongs to the glycosyltransferase 1 family. Bacterial/plant glycogen synthase subfamily.

The catalysed reaction is [(1-&gt;4)-alpha-D-glucosyl](n) + ADP-alpha-D-glucose = [(1-&gt;4)-alpha-D-glucosyl](n+1) + ADP + H(+). It participates in glycan biosynthesis; glycogen biosynthesis. Its function is as follows. Synthesizes alpha-1,4-glucan chains using ADP-glucose. The sequence is that of Glycogen synthase from Rhizobium rhizogenes (strain K84 / ATCC BAA-868) (Agrobacterium radiobacter).